The following is a 538-amino-acid chain: Chaperonin GroEL (538 aa).

ATP is bound by residues T29–P32, D86–T90, G413, N476–A478, and D492.

The protein belongs to the chaperonin (HSP60) family. As to quaternary structure, forms a cylinder of 14 subunits composed of two heptameric rings stacked back-to-back. Interacts with the co-chaperonin GroES.

Its subcellular location is the cytoplasm. The catalysed reaction is ATP + H2O + a folded polypeptide = ADP + phosphate + an unfolded polypeptide.. Functionally, together with its co-chaperonin GroES, plays an essential role in assisting protein folding. The GroEL-GroES system forms a nano-cage that allows encapsulation of the non-native substrate proteins and provides a physical environment optimized to promote and accelerate protein folding. The protein is Chaperonin GroEL of Staphylococcus aureus (strain bovine RF122 / ET3-1).